Reading from the N-terminus, the 518-residue chain is Tropomyosin-1, isoforms 33/34 (518 aa).

The stretch at 14–267 forms a coiled coil; sequence DKDGALERAL…DDLIVEKERY (254 aa). Disordered stretches follow at residues 101–125 and 288–518; these read RSEERLGSATAKLSEASQAADESER and FWNP…APPA. Positions 293–305 are enriched in pro residues; that stretch reads NPKPPTPKLPTPT. Positions 318-348 are enriched in low complexity; the sequence is AAEAAAAAEAEAAEAAAAAGEAGPDGAPAAP. Pro residues-rich tracts occupy residues 357–374 and 394–405; these read EPTPPKEPTPPPPPPPPF and EPPPPGSEPEPV. A compositionally biased stretch (low complexity) spans 406-518; sequence PAAEGEAAPA…AAAEGEAPPA (113 aa).

Belongs to the tropomyosin family. Homodimer. As to expression, both isoforms are only expressed in indirect flight muscles.

It is found in the cytoplasm. The protein resides in the cytoskeleton. Its function is as follows. Tropomyosin, in association with the troponin complex, plays a central role in the calcium dependent regulation of muscle contraction. The polypeptide is Tropomyosin-1, isoforms 33/34 (Tm1) (Drosophila melanogaster (Fruit fly)).